A 476-amino-acid chain; its full sequence is Casein kinase 1-like protein 7 (476 aa).

In terms of domain architecture, Protein kinase spans 9–278; it reads FKLGKKIGSG…LKRLFRDLFI (270 aa). ATP contacts are provided by residues 15-23 and Lys-38; that span reads IGSGSFGEL. The Proton acceptor role is filled by Asp-128. Disordered regions lie at residues 299-324 and 340-464; these read GSSS…DPIE and PGAV…TRED. The segment covering 357 to 367 has biased composition (basic and acidic residues); that stretch reads PRDRSRSRNSD. Low complexity predominate over residues 382 to 422; the sequence is ANSSSRYRASSSRKAVAASSSRPSSAGGPSESRTSSRLVSS. The segment covering 423–432 has biased composition (gly residues); it reads SGGGGSGSGN.

Belongs to the protein kinase superfamily. CK1 Ser/Thr protein kinase family. Casein kinase I subfamily. In terms of assembly, monomer. In terms of processing, autophosphorylated.

It is found in the cytoplasm. It carries out the reaction L-seryl-[protein] + ATP = O-phospho-L-seryl-[protein] + ADP + H(+). The catalysed reaction is L-threonyl-[protein] + ATP = O-phospho-L-threonyl-[protein] + ADP + H(+). Casein kinases are operationally defined by their preferential utilization of acidic proteins such as caseins as substrates. It can phosphorylate a large number of proteins. The sequence is that of Casein kinase 1-like protein 7 from Arabidopsis thaliana (Mouse-ear cress).